Reading from the N-terminus, the 86-residue chain is Probable protein BRICK1 (86 aa).

Positions 47–81 (EATTKSKLASLNEKLDILERKLEVLEVQVSSATTN) form a coiled coil.

This sequence belongs to the BRK1 family. In terms of assembly, binds SCAR.

The protein resides in the cytoplasm. It localises to the cytoskeleton. Functionally, involved in regulation of actin and microtubule organization. Part of a WAVE complex that activates the Arp2/3 complex. The chain is Probable protein BRICK1 from Oryza sativa subsp. japonica (Rice).